The primary structure comprises 125 residues: Large ribosomal subunit protein bL12 (125 aa).

Belongs to the bacterial ribosomal protein bL12 family. In terms of assembly, homodimer. Part of the ribosomal stalk of the 50S ribosomal subunit. Forms a multimeric L10(L12)X complex, where L10 forms an elongated spine to which 2 to 4 L12 dimers bind in a sequential fashion. Binds GTP-bound translation factors.

Forms part of the ribosomal stalk which helps the ribosome interact with GTP-bound translation factors. Is thus essential for accurate translation. The polypeptide is Large ribosomal subunit protein bL12 (Variovorax paradoxus (strain S110)).